A 569-amino-acid polypeptide reads, in one-letter code: Protein AF-9 (569 aa).

In terms of domain architecture, YEATS spans 1 to 138 (MASSCAVQVK…EDFRRKLLKA (138 aa)). The disordered stretch occupies residues 138-476 (AGGDPNRSIH…PPPPLLKTNN (339 aa)). Residues 149-190 (SSSSSSSSSSSSSSSSSSSSSSSSSSSSSSSSSSSSSSSSSS) are compositionally biased toward low complexity. Residues 202-265 (EHKEKPSKDS…PKPMSKEPKA (64 aa)) are compositionally biased toward basic and acidic residues. 2 positions are modified to phosphoserine: S289 and S295. The Nuclear localization signal motif lies at 296-301 (AKKRKK). Over residues 304–314 (SEALFKSFSSA) the composition is skewed to low complexity. The span at 323 to 350 (ADKKQIKDKSHVKMGKVKIESETSEKKK) shows a compositional bias: basic and acidic residues. K340 is covalently cross-linked (Glycyl lysine isopeptide (Lys-Gly) (interchain with G-Cter in SUMO2)). Residues 358–369 (DIVDPNDSDVEE) show a composition bias toward acidic residues. The span at 372–396 (SSKSDSEQPSPASSSSSSSSSFTPS) shows a compositional bias: low complexity. 2 positions are modified to phosphoserine: S413 and S420. A compositionally biased stretch (acidic residues) spans 415 to 430 (DNEEESDEAEDNDNDS). Over residues 446 to 462 (VSLSDGSDSESSSASSP) the composition is skewed to low complexity. S484 carries the phosphoserine modification.

In terms of assembly, component of the super elongation complex (SEC), at least composed of EAF1, EAF2, CDK9, MLLT3/AF9, AFF (AFF1 or AFF4), the P-TEFb complex and ELL (ELL, ELL2 or ELL3). Interacts with BCOR. Interacts with CBX8. Interacts with ALKBH4. Ubiquitously expressed. Strong expression in the spleen.

Its subcellular location is the nucleus. The protein resides in the chromosome. Chromatin reader component of the super elongation complex (SEC), a complex required to increase the catalytic rate of RNA polymerase II transcription by suppressing transient pausing by the polymerase at multiple sites along the DNA. Specifically recognizes and binds acylated histone H3, with a preference for histone H3 that is crotonylated. Crotonylation marks active promoters and enhancers and confers resistance to transcriptional repressors. Recognizes and binds histone H3 crotonylated at 'Lys-9' (H3K9cr), and with slightly lower affinity histone H3 crotonylated at 'Lys-18' (H3K18cr). Also recognizes and binds histone H3 acetylated and butyrylated at 'Lys-9' (H3K9ac and H3K9bu, respectively), but with lower affinity than crotonylated histone H3. In the SEC complex, MLLT3 is required to recruit the complex to crotonylated histones. Recruitment of the SEC complex to crotonylated histones promotes recruitment of DOT1L on active chromatin to deposit histone H3 'Lys-79' methylation (H3K79me). Plays a key role in hematopoietic stem cell (HSC) maintenance by preserving, rather than conferring, HSC stemness. Acts by binding to the transcription start site of active genes in HSCs and sustaining level of H3K79me2, probably by recruiting DOT1L. This chain is Protein AF-9 (Mllt3), found in Mus musculus (Mouse).